A 219-amino-acid polypeptide reads, in one-letter code: Ras-related protein Rab-3B (219 aa).

Residue Ala-2 is modified to N-acetylalanine. The GTP site is built by Ser-31, Ser-32, Val-33, Gly-34, Lys-35, Thr-36, Ser-37, Pro-49, and Ser-53. Thr-36 contributes to the Mg(2+) binding site. A Switch 1 motif is present at residues 45–58; the sequence is DTFTPAFVSTVGID. Mg(2+) contacts are provided by Thr-54 and Asp-77. Positions 78 to 96 match the Switch 2 motif; it reads TAGQERYRTITTAYYRGAM. GTP is bound at residue Gly-80. A Phosphothreonine modification is found at Thr-86. Positions 135, 136, 138, 166, and 167 each coordinate GTP. Phosphoserine is present on residues Ser-188 and Ser-190. S-geranylgeranyl cysteine attachment occurs at residues Cys-217 and Cys-219. Cys-219 is subject to Cysteine methyl ester.

The protein belongs to the small GTPase superfamily. Rab family. As to quaternary structure, interacts with RPH3A and RPH3AL. Interacts with RIMS1. Interacts with RIMS2. The GTP-bound form interacts with GAS8/DRC4 (via coiled-coil domains). Interacts with GDI2, and CHM; phosphorylation at Thr-86 disrupts these interactions. Interacts with MADD (via uDENN domain); the GTP-bound form is preferred for interaction. It depends on Mg(2+) as a cofactor. Phosphorylation of Thr-86 in the switch II region by LRRK2 prevents the association of RAB regulatory proteins, including CHM and RAB GDP dissociation inhibitor GDI2.

It localises to the cell membrane. Its subcellular location is the golgi apparatus. It catalyses the reaction GTP + H2O = GDP + phosphate + H(+). With respect to regulation, regulated by guanine nucleotide exchange factors (GEFs) which promote the exchange of bound GDP for free GTP. Regulated by GTPase activating proteins (GAPs) which increase the GTP hydrolysis activity. Inhibited by GDP dissociation inhibitors (GDIs) which prevent Rab-GDP dissociation. The small GTPases Rab are key regulators of intracellular membrane trafficking, from the formation of transport vesicles to their fusion with membranes. Rabs cycle between an inactive GDP-bound form and an active GTP-bound form that is able to recruit to membranes different sets of downstream effectors directly responsible for vesicle formation, movement, tethering and fusion. The chain is Ras-related protein Rab-3B from Rattus norvegicus (Rat).